Here is a 460-residue protein sequence, read N- to C-terminus: MSKLNIVVLAAGLGKRMYSALPKVLHPLAGKPLLVHVLDTARALAPHTTCVIYGHGGETVPQTIADESLIWVPQIPQLGTGHAVMQALPHIEKEGITLILYGDVPLTSVETLKKLIAMAGKQTLGLLTVELPDPAGYGRIVRHSETGEVAAIVEEKDASESQRSIGEINTGIMAVPNRYLHGWLCKLENNNAQGEYYLTDIVAMAVKDGVKVATANPAYVWETTGVNSKVQLAGLERIYQTAQANKLLEQGVALADPARIDIRGKLSCGRDVMIDINCIFEGDVQLDDGVKVGAHTILKDVRVAADSVIAPFSLIEAAEIGRNCRIGPYARIRPGTRLEDEVHIGNFVEVKNSALAAGSKANHLSYIGDAVVGRSVNIGAGTITCNYDGANKYQTIIEDDVFVGSDTQLIAPVRVARGSTIGAGSTITRDTPPDMLTLSRAKQLSIDGWKRPVKKPKPKN.

Residues 1–229 form a pyrophosphorylase region; sequence MSKLNIVVLA…VWETTGVNSK (229 aa). Residues 9 to 12, K23, Q74, 79 to 80, 101 to 103, G138, E154, N169, and N227 contribute to the UDP-N-acetyl-alpha-D-glucosamine site; these read LAAG, GT, and YGD. A Mg(2+)-binding site is contributed by D103. N227 contacts Mg(2+). Residues 230-250 are linker; the sequence is VQLAGLERIYQTAQANKLLEQ. An N-acetyltransferase region spans residues 251–460; it reads GVALADPARI…RPVKKPKPKN (210 aa). Positions 333 and 351 each coordinate UDP-N-acetyl-alpha-D-glucosamine. H363 functions as the Proton acceptor in the catalytic mechanism. UDP-N-acetyl-alpha-D-glucosamine contacts are provided by Y366 and N377. Residues A380, 386 to 387, S405, A423, and R440 contribute to the acetyl-CoA site; that span reads NY.

This sequence in the N-terminal section; belongs to the N-acetylglucosamine-1-phosphate uridyltransferase family. In the C-terminal section; belongs to the transferase hexapeptide repeat family. Homotrimer. Mg(2+) serves as cofactor.

The protein localises to the cytoplasm. It catalyses the reaction alpha-D-glucosamine 1-phosphate + acetyl-CoA = N-acetyl-alpha-D-glucosamine 1-phosphate + CoA + H(+). The catalysed reaction is N-acetyl-alpha-D-glucosamine 1-phosphate + UTP + H(+) = UDP-N-acetyl-alpha-D-glucosamine + diphosphate. It functions in the pathway nucleotide-sugar biosynthesis; UDP-N-acetyl-alpha-D-glucosamine biosynthesis; N-acetyl-alpha-D-glucosamine 1-phosphate from alpha-D-glucosamine 6-phosphate (route II): step 2/2. The protein operates within nucleotide-sugar biosynthesis; UDP-N-acetyl-alpha-D-glucosamine biosynthesis; UDP-N-acetyl-alpha-D-glucosamine from N-acetyl-alpha-D-glucosamine 1-phosphate: step 1/1. It participates in bacterial outer membrane biogenesis; LPS lipid A biosynthesis. Functionally, catalyzes the last two sequential reactions in the de novo biosynthetic pathway for UDP-N-acetylglucosamine (UDP-GlcNAc). The C-terminal domain catalyzes the transfer of acetyl group from acetyl coenzyme A to glucosamine-1-phosphate (GlcN-1-P) to produce N-acetylglucosamine-1-phosphate (GlcNAc-1-P), which is converted into UDP-GlcNAc by the transfer of uridine 5-monophosphate (from uridine 5-triphosphate), a reaction catalyzed by the N-terminal domain. The chain is Bifunctional protein GlmU from Nitrosospira multiformis (strain ATCC 25196 / NCIMB 11849 / C 71).